The sequence spans 636 residues: Protein SOSEKI 2 (636 aa).

Residues 9–103 are DIX-like oligomerization domain; the sequence is HKIEVIYLLS…YVLKALEVMD (95 aa). 4 disordered regions span residues 164–188, 281–304, 340–393, and 499–524; these read VHNNMTGKANRNEQGDAYGTTSRVP, HGRLSRRSSDTLRDSNSVGNTVDI, VEGS…TSAK, and LGSGQASESFSPASPHAPQRPIVSRP. Composition is skewed to polar residues over residues 375-390 and 499-510; these read SSKSATQNSRPVTYET and LGSGQASESFSP.

The protein belongs to the SOSEKI family. As to quaternary structure, homodimer. Forms long polymer filaments with other SOKs proteins polymers crucial for polar localization and biological activity.

It localises to the cell membrane. SOSEKI proteins locally interpret global polarity cues and can influence cell division orientation to coordinate cell polarization relative to body axes. In Physcomitrium patens (Spreading-leaved earth moss), this protein is Protein SOSEKI 2.